We begin with the raw amino-acid sequence, 264 residues long: Probable membrane transporter protein HI_0902 (264 aa).

A run of 9 helical transmembrane segments spans residues 4 to 24, 28 to 48, 49 to 69, 81 to 101, 107 to 127, 147 to 167, 183 to 203, 210 to 230, and 243 to 263; these read FILLCLLVGALAGFLAGLFGI, LVIVPTLVYLLPIVDVPESLL, MSTALGTSFATIVITGIGSAQ, AVRILAPVIMLSVFICGLFIG, ISAKIFACLVVYLATKMVLSI, ILIGMASSAAGIGGGGFIVPF, AFCGMLLGISGMFSFIVSGWG, YSLGYIYLPAVLGITATSFFT, and VSTLKKGFALFLIVVAINMFL.

It belongs to the 4-toluene sulfonate uptake permease (TSUP) (TC 2.A.102) family.

It is found in the cell membrane. The polypeptide is Probable membrane transporter protein HI_0902 (Haemophilus influenzae (strain ATCC 51907 / DSM 11121 / KW20 / Rd)).